Consider the following 187-residue polypeptide: Oligoribonuclease (187 aa).

The Exonuclease domain maps to 7–170 (LCWLDMEMTG…DDILESIEEM (164 aa)). Tyr128 is an active-site residue.

The protein belongs to the oligoribonuclease family.

The protein localises to the cytoplasm. 3'-to-5' exoribonuclease specific for small oligoribonucleotides. In Neisseria meningitidis serogroup B (strain ATCC BAA-335 / MC58), this protein is Oligoribonuclease.